Reading from the N-terminus, the 363-residue chain is Anhydro-N-acetylmuramic acid kinase (363 aa).

9–16 is an ATP binding site; sequence GTSLDGID.

This sequence belongs to the anhydro-N-acetylmuramic acid kinase family.

It carries out the reaction 1,6-anhydro-N-acetyl-beta-muramate + ATP + H2O = N-acetyl-D-muramate 6-phosphate + ADP + H(+). The protein operates within amino-sugar metabolism; 1,6-anhydro-N-acetylmuramate degradation. It functions in the pathway cell wall biogenesis; peptidoglycan recycling. In terms of biological role, catalyzes the specific phosphorylation of 1,6-anhydro-N-acetylmuramic acid (anhMurNAc) with the simultaneous cleavage of the 1,6-anhydro ring, generating MurNAc-6-P. Is required for the utilization of anhMurNAc either imported from the medium or derived from its own cell wall murein, and thus plays a role in cell wall recycling. This chain is Anhydro-N-acetylmuramic acid kinase, found in Nitrosomonas europaea (strain ATCC 19718 / CIP 103999 / KCTC 2705 / NBRC 14298).